Reading from the N-terminus, the 93-residue chain is Integration host factor subunit beta (93 aa).

Belongs to the bacterial histone-like protein family. As to quaternary structure, heterodimer of an alpha and a beta chain.

Its function is as follows. This protein is one of the two subunits of integration host factor, a specific DNA-binding protein that functions in genetic recombination as well as in transcriptional and translational control. This chain is Integration host factor subunit beta, found in Rhodospirillum centenum (strain ATCC 51521 / SW).